The following is an 84-amino-acid chain: uncharacterized protein (84 aa).

Residues 13-35 (TTLVLTIISTTTTTLFAIIQLYL) traverse the membrane as a helical segment. Residues 41–84 (LKDAVKEIVNSELSNLKTEIEELKIKQDELSRQVEEIKRKLDQK) adopt a coiled-coil conformation.

The protein localises to the host membrane. This is an uncharacterized protein from Sulfolobus islandicus rod-shaped virus 1 (SIRV-1).